A 602-amino-acid polypeptide reads, in one-letter code: MTKIDHIRNFAIIAHIDHGKSTIADRIIHSCGGLTEREMKAQVLDSMDIERERGITIKAQTVKLNYKAKDGKDYILNIIDTPGHVDFSYEVSRSLYACEGSILIVDSTQGVEAQTLANVYQALDTKHEIVPVLNKVDLPASDLEKTKKQIEEVIGIDTENAIPCSGKTGEGIEDILEQIIVSLPAPEGEKDADLKCLLVDSWYDTYLGVVILVRVINGKISKNMKIKMMSTDQEYIIEKVGVFTPKATDVNELNAGEIGFITTGIKILSETKVGDTICDATKPPQEALPGFKPSKPVVFCGLFPVDSSEYQKLKDGLGKLQLNDASFSYEAESSSALGLGFRCGFLGLLHLEIITERLEREFDINLLTTTPGVVYKVHMNKGDIIELQNPSSLPEPTLIKFIEEPWIKATIITPDQYLGAIIKVCQDKRGVQTNLSYSGNRAVLNYEIPLNEVVFDFNDRLKSMTSGYASFDYEIIGHREGDLVKLGILVNAEPVDALSMMVHKDFAQTVGREVCEKLKDLIPRHNFMIPVQAAIGGKIIARETIKGFKKDVLTKIHGGGARDRKRKLLDKQKKGKARGKQFGKVEIPQEAFIGVLKINKDQ.

The tr-type G domain occupies 5–187; it reads DHIRNFAIIA…QIIVSLPAPE (183 aa). GTP-binding positions include 17-22 and 134-137; these read DHGKST and NKVD.

The protein belongs to the TRAFAC class translation factor GTPase superfamily. Classic translation factor GTPase family. LepA subfamily.

It is found in the cell inner membrane. The catalysed reaction is GTP + H2O = GDP + phosphate + H(+). Its function is as follows. Required for accurate and efficient protein synthesis under certain stress conditions. May act as a fidelity factor of the translation reaction, by catalyzing a one-codon backward translocation of tRNAs on improperly translocated ribosomes. Back-translocation proceeds from a post-translocation (POST) complex to a pre-translocation (PRE) complex, thus giving elongation factor G a second chance to translocate the tRNAs correctly. Binds to ribosomes in a GTP-dependent manner. The protein is Elongation factor 4 of Pelagibacter ubique (strain HTCC1062).